Consider the following 109-residue polypeptide: Nucleoid-associated protein Swoo_1794 (109 aa).

The disordered stretch occupies residues 88–109 (QKDKMAEVTGGMQLPPGMKMPF).

Belongs to the YbaB/EbfC family. Homodimer.

It localises to the cytoplasm. It is found in the nucleoid. In terms of biological role, binds to DNA and alters its conformation. May be involved in regulation of gene expression, nucleoid organization and DNA protection. The sequence is that of Nucleoid-associated protein Swoo_1794 from Shewanella woodyi (strain ATCC 51908 / MS32).